Reading from the N-terminus, the 485-residue chain is Peroxisomal catalase (485 aa).

Residues histidine 53 and asparagine 126 contribute to the active site. Residue tyrosine 336 participates in heme binding.

This sequence belongs to the catalase family. In terms of assembly, homotetramer. Requires heme as cofactor.

It is found in the peroxisome matrix. The catalysed reaction is 2 H2O2 = O2 + 2 H2O. In terms of biological role, catalyzes the degradation of hydrogen peroxide (H(2)O(2)) generated by peroxisomal oxidases to water and oxygen, thereby protecting cells from the toxic effects of hydrogen peroxide. The chain is Peroxisomal catalase (POX9) from Candida tropicalis (Yeast).